The chain runs to 390 residues: S-adenosylmethionine synthase 2 (390 aa).

E9 is a Mg(2+) binding site. H15 is an ATP binding site. E43 provides a ligand contact to K(+). L-methionine-binding residues include E56 and Q99. ATP contacts are provided by residues 167–169 (DGK), 235–238 (SGRF), D246, 252–253 (RK), A269, K273, and K277. Residue D246 participates in L-methionine binding. K277 contacts L-methionine.

It belongs to the AdoMet synthase family. As to quaternary structure, homotetramer. Mn(2+) serves as cofactor. The cofactor is Mg(2+). Co(2+) is required as a cofactor. It depends on K(+) as a cofactor.

It is found in the cytoplasm. The enzyme catalyses L-methionine + ATP + H2O = S-adenosyl-L-methionine + phosphate + diphosphate. It participates in amino-acid biosynthesis; S-adenosyl-L-methionine biosynthesis; S-adenosyl-L-methionine from L-methionine: step 1/1. In terms of biological role, catalyzes the formation of S-adenosylmethionine from methionine and ATP. The reaction comprises two steps that are both catalyzed by the same enzyme: formation of S-adenosylmethionine (AdoMet) and triphosphate, and subsequent hydrolysis of the triphosphate. The polypeptide is S-adenosylmethionine synthase 2 (SAM2) (Actinidia chinensis var. chinensis (Chinese soft-hair kiwi)).